Consider the following 435-residue polypeptide: MVKVVRNVVCPFCGTLCDDLEILVEDNHIVGTRHACRIGNAKFMHFEGAVRYTEPLMRENKKDDFKKVDYETAIEETARLLTEATLPLIYGWSATECHAHMYGVELAELVGAVIDNTASVUHGPSLLAVQDVGYPVCTLGEVKNRADVIIFWGSNPMHAHPRHMSRYSVFARGFFRERGREDRTLIVVDPRETDTAKLADIHLQVEPHKDYELVSAMRAVLKGFELQVDKVAGVPADLIYEAVEVCKNAQFGELFFAMGVTMTRGKHRNIDNAIQLVIDLNAYTKFGLMPMRGHYNVNGFNQVLTWVTGYPFGVDFSRGYPRYNPGETTANDLLQRGETDMMLNIASDPGAHFPQKAVQHMAKIPLVCIDPHETPTTQLANIIIPPAIAGVEVEGTAYRMDGVPIQLRKVIDPPEGVLPDREILKILIKKVKEML.

Residue Sec-121 is a non-standard amino acid, selenocysteine.

This sequence belongs to the FwdB family. As to quaternary structure, this enzyme is composed of six subunits FwdA, FwdC, FwdD, FwdE, FwdF and FwdG. It depends on W-bis(molybdopterin guanine dinucleotide) as a cofactor.

It catalyses the reaction N-formylmethanofuran + 2 oxidized [2Fe-2S]-[ferredoxin] + H2O = methanofuran + 2 reduced [2Fe-2S]-[ferredoxin] + CO2 + H(+). The protein operates within one-carbon metabolism; methanogenesis from CO(2); 5,10-methenyl-5,6,7,8-tetrahydromethanopterin from CO(2): step 1/3. In terms of biological role, catalyzes the reversible oxidation of CO(2) and methanofuran (MFR) to N-formylmethanofuran (CHO-MFR). This enzyme is oxygen-labile. The chain is Tungsten-containing formylmethanofuran dehydrogenase 2 subunit B (fwdB) from Methanocaldococcus jannaschii (strain ATCC 43067 / DSM 2661 / JAL-1 / JCM 10045 / NBRC 100440) (Methanococcus jannaschii).